A 398-amino-acid chain; its full sequence is 1-deoxy-D-xylulose 5-phosphate reductoisomerase (398 aa).

NADPH is bound by residues Thr21, Gly22, Ser23, Ile24, Gly47, Asn50, and Asn127. Position 128 (Lys128) interacts with 1-deoxy-D-xylulose 5-phosphate. Glu129 contributes to the NADPH binding site. Mn(2+) is bound at residue Asp151. 4 residues coordinate 1-deoxy-D-xylulose 5-phosphate: Ser152, Glu153, Ser177, and His200. Glu153 serves as a coordination point for Mn(2+). Gly206 contacts NADPH. Ser213, Asn218, Lys219, and Glu222 together coordinate 1-deoxy-D-xylulose 5-phosphate. A Mn(2+)-binding site is contributed by Glu222.

Belongs to the DXR family. Mg(2+) serves as cofactor. Mn(2+) is required as a cofactor.

It catalyses the reaction 2-C-methyl-D-erythritol 4-phosphate + NADP(+) = 1-deoxy-D-xylulose 5-phosphate + NADPH + H(+). It participates in isoprenoid biosynthesis; isopentenyl diphosphate biosynthesis via DXP pathway; isopentenyl diphosphate from 1-deoxy-D-xylulose 5-phosphate: step 1/6. Catalyzes the NADPH-dependent rearrangement and reduction of 1-deoxy-D-xylulose-5-phosphate (DXP) to 2-C-methyl-D-erythritol 4-phosphate (MEP). The chain is 1-deoxy-D-xylulose 5-phosphate reductoisomerase from Mycolicibacterium smegmatis (strain ATCC 700084 / mc(2)155) (Mycobacterium smegmatis).